The chain runs to 462 residues: MADRISTGELGRRPGQGRVDLLLVGDATRYFLAGSVQKFFSSTAQITLTISNVKKVAALLAANSFDIIFLKVTSTLTAEEQEAVRLIRSGKKKNTHLLFAFVIPEKLRGYISDYGADISFNEPLTLEKVNTVINYWKTYFTNTDMGNTELPPECRLYFQTSCSELGGHFPTDLFLCSELLNNDTGLGLKAPLSSPERNKKASFLHSSKEKLRRERIKFCCEQLRTLLPYVKGRKSDVASVIEATVDYVKQVRESLSPAIMAQITESLQSNKRFSKRQMPIELFLPCTATSQRGDAMLTSAFSPVQEIQLLADQGLNVYSMPAAGGPLEEAVRGQPGSVSEDLYKTRVPSTTLSLNSFHAVRYCSGPVSPHEAAARTNQNISIYLPPTGPSVSSFTPQHCNAMLCPTRPASSSCLCTSGHELPASSRTASSSIFRGFRESDSGHQASQQPTGPSLQPQDSSYF.

The bHLH domain occupies Lys-200–Val-251. Positions Pro-422 to Phe-462 are disordered. The span at Gly-442 to Phe-462 shows a compositional bias: polar residues.

The protein resides in the nucleus. Its function is as follows. Probable transcription factor, which may be involved in spermatogenesis and oogenesis. The polypeptide is Spermatogenesis- and oogenesis-specific basic helix-loop-helix-containing protein 2 (Sohlh2) (Rattus norvegicus (Rat)).